Consider the following 472-residue polypeptide: 3-isopropylmalate dehydratase large subunit (472 aa).

The [4Fe-4S] cluster site is built by Cys-352, Cys-412, and Cys-415.

The protein belongs to the aconitase/IPM isomerase family. LeuC type 1 subfamily. Heterodimer of LeuC and LeuD. [4Fe-4S] cluster serves as cofactor.

It catalyses the reaction (2R,3S)-3-isopropylmalate = (2S)-2-isopropylmalate. Its pathway is amino-acid biosynthesis; L-leucine biosynthesis; L-leucine from 3-methyl-2-oxobutanoate: step 2/4. In terms of biological role, catalyzes the isomerization between 2-isopropylmalate and 3-isopropylmalate, via the formation of 2-isopropylmaleate. This Roseiflexus castenholzii (strain DSM 13941 / HLO8) protein is 3-isopropylmalate dehydratase large subunit.